We begin with the raw amino-acid sequence, 254 residues long: Undecaprenyl-diphosphatase (254 aa).

A run of 8 helical transmembrane segments spans residues 1-21 (MGII…FLPV), 41-61 (AHKA…VFLY), 75-95 (LIIA…IIKG), 96-116 (LFSP…FIAV), 130-150 (ILKI…IAMI), 174-194 (AEFS…YDIM), 210-230 (TGFV…IGFV), and 234-254 (NFVP…LFVL).

The protein belongs to the UppP family.

It is found in the cell inner membrane. The catalysed reaction is di-trans,octa-cis-undecaprenyl diphosphate + H2O = di-trans,octa-cis-undecaprenyl phosphate + phosphate + H(+). Functionally, catalyzes the dephosphorylation of undecaprenyl diphosphate (UPP). Confers resistance to bacitracin. The chain is Undecaprenyl-diphosphatase from Persephonella marina (strain DSM 14350 / EX-H1).